The following is an 867-amino-acid chain: Probable beta-glucosidase A (867 aa).

Residues 1-18 form the signal peptide; that stretch reads MRFSWLEVAVTAASLANA. Residues Asn67, Asn218, and Asn259 are each glycosylated (N-linked (GlcNAc...) asparagine). Residue Asp287 is part of the active site. N-linked (GlcNAc...) asparagine glycosylation is found at Asn322, Asn329, Asn361, Asn449, Asn530, Asn549, Asn571, Asn675, and Asn719.

This sequence belongs to the glycosyl hydrolase 3 family.

The protein localises to the secreted. The enzyme catalyses Hydrolysis of terminal, non-reducing beta-D-glucosyl residues with release of beta-D-glucose.. Its pathway is glycan metabolism; cellulose degradation. Its function is as follows. Beta-glucosidases are one of a number of cellulolytic enzymes involved in the degradation of cellulosic biomass. Catalyzes the last step releasing glucose from the inhibitory cellobiose. In Aspergillus clavatus (strain ATCC 1007 / CBS 513.65 / DSM 816 / NCTC 3887 / NRRL 1 / QM 1276 / 107), this protein is Probable beta-glucosidase A (bglA).